A 188-amino-acid chain; its full sequence is RWD domain-containing protein 4 (188 aa).

Position 2 is an N-acetylserine (S2). One can recognise an RWD domain in the interval 9-111 (MELEALRSIY…EYAKDNKEQF (103 aa)). The tract at residues 132–167 (TPNTAPSSKKKDKKEQLSKAQKRKLADKTDHKGELP) is disordered. Residues 155–166 (KLADKTDHKGEL) are compositionally biased toward basic and acidic residues.

The sequence is that of RWD domain-containing protein 4 (RWDD4) from Homo sapiens (Human).